The sequence spans 209 residues: Uracil phosphoribosyltransferase (209 aa).

Residues R79, R104, and 131–139 (DPMLATGGS) contribute to the 5-phospho-alpha-D-ribose 1-diphosphate site. Residues I194 and 199-201 (GDA) each bind uracil. 5-phospho-alpha-D-ribose 1-diphosphate is bound at residue D200.

It belongs to the UPRTase family. Mg(2+) serves as cofactor.

The enzyme catalyses UMP + diphosphate = 5-phospho-alpha-D-ribose 1-diphosphate + uracil. It participates in pyrimidine metabolism; UMP biosynthesis via salvage pathway; UMP from uracil: step 1/1. With respect to regulation, allosterically activated by GTP. Functionally, catalyzes the conversion of uracil and 5-phospho-alpha-D-ribose 1-diphosphate (PRPP) to UMP and diphosphate. The protein is Uracil phosphoribosyltransferase of Symbiobacterium thermophilum (strain DSM 24528 / JCM 14929 / IAM 14863 / T).